The chain runs to 363 residues: 3-isopropylmalate dehydrogenase (363 aa).

78–91 lines the NAD(+) pocket; it reads GPKWEHLPPAEQPE. Arg-99, Arg-109, Arg-138, and Asp-227 together coordinate substrate. 3 residues coordinate Mg(2+): Asp-227, Asp-251, and Asp-255. 285-297 is a binding site for NAD(+); sequence GSAPDIAGKNIAN.

This sequence belongs to the isocitrate and isopropylmalate dehydrogenases family. LeuB type 1 subfamily. In terms of assembly, homodimer. Requires Mg(2+) as cofactor. Mn(2+) serves as cofactor.

The protein resides in the cytoplasm. It carries out the reaction (2R,3S)-3-isopropylmalate + NAD(+) = 4-methyl-2-oxopentanoate + CO2 + NADH. It participates in amino-acid biosynthesis; L-leucine biosynthesis; L-leucine from 3-methyl-2-oxobutanoate: step 3/4. Catalyzes the oxidation of 3-carboxy-2-hydroxy-4-methylpentanoate (3-isopropylmalate) to 3-carboxy-4-methyl-2-oxopentanoate. The product decarboxylates to 4-methyl-2 oxopentanoate. This Yersinia pestis protein is 3-isopropylmalate dehydrogenase.